A 785-amino-acid chain; its full sequence is Semaphorin-3E (785 aa).

Residues 1–25 (MLGRMASAQDLLILALCGLLLELPA) form the signal peptide. The region spanning 36 to 520 (RLRLSHKELW…TESVIAQVKF (485 aa)) is the Sema domain. An N-linked (GlcNAc...) asparagine glycan is attached at Asn48. Cys109 and Cys119 form a disulfide bridge. N-linked (GlcNAc...) asparagine glycosylation is present at Asn130. Cystine bridges form between Cys137-Cys146, Cys274-Cys386, Cys298-Cys346, and Cys523-Cys541. Asn600 is a glycosylation site (N-linked (GlcNAc...) asparagine). Positions 651–740 (LDAGTYFCQT…EYCEKVWCTD (90 aa)) constitute an Ig-like C2-type domain. Cys658 and Cys733 are joined by a disulfide. The disordered stretch occupies residues 744–785 (KKLKMSPSKWKYANPQEKRQDQEKKARIRPEHYRLPRNIADS). Residues 759–777 (QEKRQDQEKKARIRPEHYR) show a composition bias toward basic and acidic residues.

It belongs to the semaphorin family. Collapsin-1, -2, -3, and -5 bind to overlapping but distinct axon tracts.

It is found in the secreted. In terms of biological role, plays an important role in signaling via the cell surface receptor PLXND1. Mediates reorganization of the actin cytoskeleton, leading to the retraction of cell projections. Promotes focal adhesion disassembly and inhibits adhesion of endothelial cells to the extracellular matrix. Regulates angiogenesis. Can down-regulate sprouting angiogenesis. Required for normal vascular patterning during embryogenesis. Induces the collapse and paralysis of neuronal growth cones. Plays an important role in ensuring the specificity of synapse formation. The polypeptide is Semaphorin-3E (SEMA3E) (Gallus gallus (Chicken)).